Consider the following 437-residue polypeptide: MNKKSYINHYLTLFKVTTLLFTLSSNPVWANIKTVQGTTSGFPLLTRTFTFNGNLQWNVSALQPAYIVSSQARDNLDTVHIQSSEINAPTNSLAPFNNWINTKSAVELGYSFAGITCTSNPCPTMKLPLLFHPDLTNLTPPGKKNSDGGEIFKLHNESNLGVSFQIGVKTNTSLDWVNAKNNFSSLKVLMVPFNSSDKISLHLRAKFHLLTDFSSLNNDITIDPMNTSIGKINLETWRGSTGNFSVKYVGEDKGDISIFFNTPKIILKKQQRRCTLNNAPVSPNPVKLRAVKKRELEAQSEMEGGTFQLRVNCDNTTYNKANGKWLFPVVKVTFTDEDGTTNNGTNDLLRTQTGSGQATGVSLRIKRENGTETVKYGADSAQMGNAGQFELRKQPSPAGGDQYAEETFKVYYVKDSTRGTLIEGKVKAAATFTMSYQ.

The first 30 residues, 1–30 (MNKKSYINHYLTLFKVTTLLFTLSSNPVWA), serve as a signal peptide directing secretion.

The protein belongs to the fimbrial protein family.

The protein resides in the fimbrium. In terms of biological role, may be a minor structural protein required for pilus biogenesis. May be the adhesive component in the pili. The sequence is that of Minor fimbrial subunit HifE (hifE) from Haemophilus influenzae.